The following is a 501-amino-acid chain: Aspartate--tRNA ligase, cytoplasmic (501 aa).

A Phosphothreonine modification is found at threonine 52. At lysine 74 the chain carries N6-acetyllysine. L-aspartate is bound at residue glutamate 229. Serine 249 carries the post-translational modification Phosphoserine. An aspartate region spans residues 251–254; the sequence is QLYK. Arginine 273 is an L-aspartate binding site. ATP-binding positions include 273-275 and 281-283; these read RAE and RHL. The residue at position 374 (lysine 374) is an N6-acetyllysine. The tract at residues 411-415 is binding site for the 3'-end of tRNA; that stretch reads KQSNS. Glutamate 424 contacts ATP. The L-aspartate site is built by serine 427 and arginine 431. An ATP-binding site is contributed by 472-475; the sequence is GLER. Threonine 500 bears the Phosphothreonine; by PKA mark.

Belongs to the class-II aminoacyl-tRNA synthetase family. Type 2 subfamily. Homodimer. Part of a multisubunit complex that groups tRNA ligases for Arg (RARS1), Asp (DARS1), Gln (QARS1), Ile (IARS1), Leu (LARS1), Lys (KARS1), Met (MARS1) the bifunctional ligase for Glu and Pro (EPRS1) and the auxiliary subunits AIMP1/p43, AIMP2/p38 and EEF1E1/p18.

It localises to the cytoplasm. The catalysed reaction is tRNA(Asp) + L-aspartate + ATP = L-aspartyl-tRNA(Asp) + AMP + diphosphate. Catalyzes the specific attachment of an amino acid to its cognate tRNA in a 2 step reaction: the amino acid (AA) is first activated by ATP to form AA-AMP and then transferred to the acceptor end of the tRNA. The sequence is that of Aspartate--tRNA ligase, cytoplasmic (DARS1) from Pongo abelii (Sumatran orangutan).